We begin with the raw amino-acid sequence, 341 residues long: MRVLGIETSCDETGVAIYDQHKGLLANEVYSQSELHADYGGVVPELAARDHVRKIVPLISCTLNRARLEPKNIDGIAYTAGPGLMGALLVGATVARTLAYAWKIPAIDIHHMEAHLLAPMLEKKVPTFPFIALLVSGGHTQLVSASNIGEYKILGESIDDAVGEVFDKIAILLGLKYPGGALLSKMAQKGISKRYVFPRPMIDRPGLNFSFSGLKTCTVNTIMSNSHDAQNCADIARAFEDAIIETLAIKCRRALNQTGLKCLVISGGVSANHALRSYLLKMMYTLQGSLFYPRPEFCTDNGAMVAYAGLIRLKAGLFSDLPILVRPRWSLEDLPRIKQSL.

Residues H111 and H115 each coordinate Fe cation. Substrate contacts are provided by residues 134–138 (LVSGG), D167, G180, and N272. D300 contacts Fe cation.

This sequence belongs to the KAE1 / TsaD family. Fe(2+) serves as cofactor.

Its subcellular location is the cytoplasm. It catalyses the reaction L-threonylcarbamoyladenylate + adenosine(37) in tRNA = N(6)-L-threonylcarbamoyladenosine(37) in tRNA + AMP + H(+). Required for the formation of a threonylcarbamoyl group on adenosine at position 37 (t(6)A37) in tRNAs that read codons beginning with adenine. Is involved in the transfer of the threonylcarbamoyl moiety of threonylcarbamoyl-AMP (TC-AMP) to the N6 group of A37, together with TsaE and TsaB. TsaD likely plays a direct catalytic role in this reaction. The polypeptide is tRNA N6-adenosine threonylcarbamoyltransferase (Blochmanniella pennsylvanica (strain BPEN)).